The following is a 601-amino-acid chain: Probable HECT-type ubiquitin ligase-interacting protein creD (601 aa).

Disordered regions lie at residues 374–397 (EVDP…GTLS) and 455–489 (SADY…DHDH). A compositionally biased stretch (low complexity) spans 461-473 (PSSGSNSHSPASP). Over residues 475 to 489 (LSRRPSDEGYHDHDH) the composition is skewed to basic and acidic residues.

Belongs to the arrestin family. As to quaternary structure, interacts with hulA.

Its function is as follows. Component of the regulatory network controlling carbon source utilization through ubiquitination and deubiquitination involving creA, creB, creC, creD and acrB. May be involved in signaling by recognizing appropriately phosphorylated substrates via its arrestin domains and then recruit a HECT-type ubiquitin ligase such as hulA, leading to ubiquitination of the substrate, providing a link between ubiquitination and phosphorylation in protein regulation and stability. This is Probable HECT-type ubiquitin ligase-interacting protein creD (creD) from Neosartorya fischeri (strain ATCC 1020 / DSM 3700 / CBS 544.65 / FGSC A1164 / JCM 1740 / NRRL 181 / WB 181) (Aspergillus fischerianus).